Reading from the N-terminus, the 388-residue chain is Acetate kinase (388 aa).

Asn-8 lines the Mg(2+) pocket. Residue Lys-15 participates in ATP binding. Residue Arg-88 coordinates substrate. The Proton donor/acceptor role is filled by Asp-144. ATP is bound by residues 202 to 206 (HLGNG), 276 to 278 (DMR), and 321 to 325 (GVGEN). Glu-375 provides a ligand contact to Mg(2+).

It belongs to the acetokinase family. Homodimer. The cofactor is Mg(2+). Mn(2+) is required as a cofactor.

It localises to the cytoplasm. It catalyses the reaction acetate + ATP = acetyl phosphate + ADP. The protein operates within metabolic intermediate biosynthesis; acetyl-CoA biosynthesis; acetyl-CoA from acetate: step 1/2. Its function is as follows. Catalyzes the formation of acetyl phosphate from acetate and ATP. Can also catalyze the reverse reaction. The sequence is that of Acetate kinase from Mycoplasmoides gallisepticum (strain R(low / passage 15 / clone 2)) (Mycoplasma gallisepticum).